The chain runs to 405 residues: Angiopoietin-related protein 4 (405 aa).

The signal sequence occupies residues 1-23 (MRCAPTAGAALVLCAATAGLLSA). A coiled-coil region spans residues 54-146 (GLREHVERTR…QNLQSQIDLL (93 aa)). Asn-176 carries an N-linked (GlcNAc...) asparagine glycan. Positions 178-400 (TRLHRPPRDC…ATTLLIQPME (223 aa)) constitute a Fibrinogen C-terminal domain. Cys-187 and Cys-215 form a disulfide bridge. N-linked (GlcNAc...) asparagine glycosylation is found at Asn-231 and Asn-237. Cys-340 and Cys-353 form a disulfide bridge.

In terms of assembly, homooligomer; disulfide-linked via Cys residues in the N-terminal part of the protein. The homooligomer undergoes proteolytic processing to release its carboxyl fibrinogen-like domain, which circulates as a monomer. The homooligomer unprocessed form is able to interact with the extracellular matrix. N-glycosylated. Post-translationally, forms disulfide-linked dimers and tetramers. In terms of processing, cleaved into a smaller N-terminal chain and a larger chain that contains the fibrinogen C-terminal domain; both cleaved and uncleaved forms are detected in the extracellular space. The cleaved form is not present within the cell.

The protein resides in the secreted. The protein localises to the extracellular space. It is found in the extracellular matrix. Its function is as follows. Mediates inactivation of the lipoprotein lipase LPL, and thereby plays a role in the regulation of triglyceride clearance from the blood serum and in lipid metabolism. May also play a role in regulating glucose homeostasis and insulin sensitivity. Inhibits proliferation, migration, and tubule formation of endothelial cells and reduces vascular leakage. Upon heterologous expression, inhibits the adhesion of endothelial cell to the extracellular matrix (ECM), and inhibits the reorganization of the actin cytoskeleton, formation of actin stress fibers and focal adhesions in endothelial cells that have adhered to ANGPTL4-containing ECM (in vitro). Depending on context, may modulate tumor-related angiogenesis. Mediates inactivation of the lipoprotein lipase LPL, and thereby plays an important role in the regulation of triglyceride clearance from the blood serum and in lipid metabolism. Has higher activity in LPL inactivation than the uncleaved protein. This chain is Angiopoietin-related protein 4 (Angptl4), found in Rattus norvegicus (Rat).